The primary structure comprises 611 residues: Zinc metalloproteinase-disintegrin-like MTP9 (611 aa).

Residues 1-20 (MIEVLLVTICFTVFPYQGSS) form the signal peptide. Residues 21–191 (IILESGNVND…DEPIEKISQL (171 aa)) constitute a propeptide that is removed on maturation. Residues 205 to 401 (KYIELYVVVD…VRPQCILNKP (197 aa)) form the Peptidase M12B domain. Glu-208 is a Ca(2+) binding site. The N-linked (GlcNAc...) asparagine glycan is linked to Asn-282. Asp-292 provides a ligand contact to Ca(2+). Disulfide bonds link Cys-316–Cys-396, Cys-356–Cys-380, and Cys-358–Cys-363. Residues His-341, His-345, and His-351 each coordinate Zn(2+). The Ca(2+) site is built by Cys-396, Asn-399, Asn-414, Phe-416, Glu-418, Glu-421, and Asp-424. Residues 409 to 493 (PPVCGNYFVE…ECPTDSFQRN (85 aa)) form the Disintegrin domain. Cystine bridges form between Cys-412–Cys-441, Cys-423–Cys-436, Cys-425–Cys-431, Cys-435–Cys-456, Cys-447–Cys-453, Cys-452–Cys-478, Cys-465–Cys-485, Cys-472–Cys-504, Cys-497–Cys-509, Cys-516–Cys-566, Cys-531–Cys-573, Cys-541–Cys-575, Cys-544–Cys-554, Cys-561–Cys-599, and Cys-593–Cys-604. The D/ECD-tripeptide signature appears at 471–473 (DCD). 4 residues coordinate Ca(2+): Asp-473, Leu-474, Glu-476, and Asp-488. Residues Asn-548 and Asn-570 are each glycosylated (N-linked (GlcNAc...) asparagine).

It belongs to the venom metalloproteinase (M12B) family. P-III subfamily. Monomer. It depends on Zn(2+) as a cofactor. Expressed by the venom gland.

The protein localises to the secreted. Snake venom zinc metalloproteinase that may impair hemostasis in the prey. This chain is Zinc metalloproteinase-disintegrin-like MTP9, found in Drysdalia coronoides (White-lipped snake).